The sequence spans 704 residues: MSGIALQGIRCHACRNAAFRSFAAISGLSSSIRRPQSSISYPGSKLYQRNVRTTGRRQFSTLGSVKSQVDSDLPTKTETKEDASAESSHIPWYLQDESHKPSSHPLKQQELPPLPENPPPILENLLQYISVDAGLDDLALLDLRGLDPPPALGANLIMIIGTARSVKHLNVSGDRLCRWLRSNYQLRPIADGLLGRNELKIKLRRRARKAKATGDASSLNSRDDGITTGWICVNVGDVENGPLKTKNSQDRNFIGFGGTEDKVRIVVQMLVEEKRSELQLEALWGSLLNPEAGEMNPAPRDDIWGNLSSETTSSRKGVDSIASTFSQRFPGRRHIHTQARPDTLEPLSHEILGNIVQESRPALPSKIVSTSMASPSVSSLLEQLSQLPEEEARRELGLGPGDRDSTLFLRLFYEAVSKSDTETVLIDKLSFARAAVLLKHPAYSKTDLYRAFKSMAASGCDISEELAMDTVRTLLSFQGPENAANERVPEQDIDLALRVLEHMSLRGIKIFNGEVFFLLHKASAFQSHVLPANDAPGATNTPADPDSISKVPVEELDHITTVHNRLSKLMASANVDFDYKDYPELLKMYFEHGNYSNFWRLWHRIPLMQIPRTKELYLLMFRLHAKLGHQRQAVDCLSSWVPMMAREQPPVALDEELTRDIMACMLVADPAIDQKTDDGTVSQFTRLWKQCLRDLKSFKAANSQ.

The transit peptide at 1 to 59 directs the protein to the mitochondrion; sequence MSGIALQGIRCHACRNAAFRSFAAISGLSSSIRRPQSSISYPGSKLYQRNVRTTGRRQF. Positions 57 to 72 are enriched in polar residues; that stretch reads RQFSTLGSVKSQVDSD. Residues 57 to 118 form a disordered region; it reads RQFSTLGSVK…QELPPLPENP (62 aa). Over residues 73–83 the composition is skewed to basic and acidic residues; that stretch reads LPTKTETKEDA.

Belongs to the ATP25 family.

The protein resides in the mitochondrion inner membrane. In terms of biological role, probable mitochondrial mRNA stabilization factor. The polypeptide is ATPase synthesis protein 25, mitochondrial (ATP25) (Arthroderma benhamiae (strain ATCC MYA-4681 / CBS 112371) (Trichophyton mentagrophytes)).